The sequence spans 418 residues: UDP-N-acetylglucosamine 1-carboxyvinyltransferase (418 aa).

22-23 (KN) serves as a coordination point for phosphoenolpyruvate. R92 is a binding site for UDP-N-acetyl-alpha-D-glucosamine. The Proton donor role is filled by C116. C116 is modified (2-(S-cysteinyl)pyruvic acid O-phosphothioketal). Residues 121-125 (RPIDL), D305, and L327 each bind UDP-N-acetyl-alpha-D-glucosamine.

The protein belongs to the EPSP synthase family. MurA subfamily.

It is found in the cytoplasm. The catalysed reaction is phosphoenolpyruvate + UDP-N-acetyl-alpha-D-glucosamine = UDP-N-acetyl-3-O-(1-carboxyvinyl)-alpha-D-glucosamine + phosphate. It participates in cell wall biogenesis; peptidoglycan biosynthesis. In terms of biological role, cell wall formation. Adds enolpyruvyl to UDP-N-acetylglucosamine. The sequence is that of UDP-N-acetylglucosamine 1-carboxyvinyltransferase from Campylobacter jejuni subsp. doylei (strain ATCC BAA-1458 / RM4099 / 269.97).